The chain runs to 304 residues: MQKFDTKTFQGLILTLQDYWARQGCTIVQPLDMEVGAGTSHPMTCLRAIGPEPIAAAYVQPSRRPTDGRYGENPNRLQHYYQFQVIIKPSPDNIQELYLGSLKELGLDPTIHDIRFVEDNWENPTLGAWGLGWEVWLNGMEVTQFTYFQQVGGLECKPVTGEITYGLERLAMYIQGVDSVYDLIWCDGPLGTTTYGDIYHQNEVEQSTYNFEYADVDFLFSCFEQYEKEAQSLLALETPLPLPAYERILKAGHTFNLLDARKAISVTERQRYILRIRTLTKAVAEAYYASREALGFPMCKKNQN.

It belongs to the class-II aminoacyl-tRNA synthetase family. Tetramer of two alpha and two beta subunits.

The protein resides in the cytoplasm. The catalysed reaction is tRNA(Gly) + glycine + ATP = glycyl-tRNA(Gly) + AMP + diphosphate. This Yersinia pseudotuberculosis serotype O:1b (strain IP 31758) protein is Glycine--tRNA ligase alpha subunit.